The primary structure comprises 580 residues: Peptidyl-prolyl cis-trans isomerase-like 2 (580 aa).

The region spanning K42–K115 is the U-box domain. Disordered regions lie at residues I182 to S201, Q227 to S259, S439 to P459, Q479 to T530, and F553 to D580. A PPIase cyclophilin-type domain is found at Q309–I468. Positions S439–P457 are enriched in polar residues. The span at E490 to D507 shows a compositional bias: basic and acidic residues.

It belongs to the cyclophilin-type PPIase family. PPIL2 subfamily.

The protein localises to the nucleus. The catalysed reaction is [protein]-peptidylproline (omega=180) = [protein]-peptidylproline (omega=0). It catalyses the reaction S-ubiquitinyl-[E2 ubiquitin-conjugating enzyme]-L-cysteine + [acceptor protein]-L-lysine = [E2 ubiquitin-conjugating enzyme]-L-cysteine + N(6)-ubiquitinyl-[acceptor protein]-L-lysine.. It participates in protein modification; protein ubiquitination. May catalyze the cis-trans isomerization of proline imidic peptide bonds in oligopeptides thereby assisting the folding of proteins. May also function as a chaperone, playing a role in intracellular transport of proteins. May also have a protein ubiquitin ligase activity acting as an E3 ubiquitin protein ligase or as a ubiquitin-ubiquitin ligase promoting elongation of ubiquitin chains on proteins. The protein is Peptidyl-prolyl cis-trans isomerase-like 2 (cyp8) of Emericella nidulans (strain FGSC A4 / ATCC 38163 / CBS 112.46 / NRRL 194 / M139) (Aspergillus nidulans).